Consider the following 151-residue polypeptide: Small ribosomal subunit protein uS15z (151 aa).

Belongs to the universal ribosomal protein uS15 family.

In Arabidopsis thaliana (Mouse-ear cress), this protein is Small ribosomal subunit protein uS15z (RPS13A).